Reading from the N-terminus, the 1203-residue chain is Zinc finger and BTB domain-containing protein 38 (1203 aa).

A BTB domain is found at 33–100; that stretch reads CDVTIIVEDT…IYSSTVVVRR (68 aa). Residue lysine 43 forms a Glycyl lysine isopeptide (Lys-Gly) (interchain with G-Cter in SUMO2) linkage. The residue at position 130 (serine 130) is a Phosphoserine. Residues lysine 145, lysine 148, lysine 151, and lysine 260 each participate in a glycyl lysine isopeptide (Lys-Gly) (interchain with G-Cter in SUMO2) cross-link. The tract at residues 230–334 is disordered; that stretch reads EAYRSQPLRE…PSETPGPPAA (105 aa). The segment covering 269–280 has biased composition (polar residues); sequence TQTQDSDSTTEN. The interaction with CBFA2T3 stretch occupies residues 299–522; that stretch reads PAPILSHSEP…RRYQCIFCLE (224 aa). Over residues 313 to 322 the composition is skewed to basic and acidic residues; that stretch reads GDVHFPREDE. The C2H2-type 1 zinc finger occupies 341–363; that stretch reads YNCSCCSKSFDSSTLLGAHMQLH. The C2H2-type 2; degenerate zinc-finger motif lies at 370 to 394; the sequence is FVCKYCNKQFTTLNRLDRHEQICMR. 3 C2H2-type zinc fingers span residues 459–481, 487–509, and 515–538; these read YSCV…ANVH, YPCH…EIWH, and YQCI…KSFH. Glycyl lysine isopeptide (Lys-Gly) (interchain with G-Cter in SUMO2) cross-links involve residues lysine 549 and lysine 556. Composition is skewed to polar residues over residues 581–598, 607–628, 635–644, and 731–741; these read RNSS…NESP, LPSS…TSSP, PSWQGTPTSA, and SNHQSPSQPVA. Disordered stretches follow at residues 581–644 and 731–776; these read RNSS…PTSA and SNHQ…VPCN. The span at 747-757 shows a compositional bias: basic and acidic residues; sequence KDSKPEADKAS. Residues lysine 750, lysine 755, lysine 796, lysine 806, lysine 813, lysine 834, lysine 842, and lysine 849 each participate in a glycyl lysine isopeptide (Lys-Gly) (interchain with G-Cter in SUMO2) cross-link. Disordered stretches follow at residues 857-882 and 895-914; these read KPKY…SPLG and FDEV…YYNY. Residues 866-877 are compositionally biased toward basic and acidic residues; that stretch reads TLPRESDPETRG. Residues lysine 915, lysine 971, lysine 976, lysine 984, lysine 988, lysine 998, lysine 1024, and lysine 1033 each participate in a glycyl lysine isopeptide (Lys-Gly) (interchain with G-Cter in SUMO2) cross-link. 5 consecutive C2H2-type zinc fingers follow at residues 1017–1039, 1045–1067, 1073–1095, 1101–1123, and 1132–1154; these read YICE…MRCH, YQCK…ERIH, FICQ…ERIH, YHCQ…ERRH, and FACF…QKKH. Residues lysine 1116, lysine 1139, lysine 1142, lysine 1157, and lysine 1190 each participate in a glycyl lysine isopeptide (Lys-Gly) (interchain with G-Cter in SUMO2) cross-link. Residues 1172 to 1203 are disordered; that stretch reads NSDLLESQPCTDSEDSDQKDDIKKPLLKMSFE.

Interacts with CBFA2T3, ZBTB4 and RBBP6. In terms of processing, ubiquitinated by RBBP6; leading to its degradation by the proteasome. As to expression, widely expressed throughout the adult brain where it is found mainly in neurons. Also expressed in the adrenal medulla. Not detected in non-neural tissues including heart, spleen, liver and muscle. In the embryo, expressed in the developing brain and spinal cord but not in the migratory neural crest. Also expressed in the limbs, transiently in somites, and in the embryonic liver. In the embryonic neural tube, expression is restricted to late postmitotic neurons.

It is found in the nucleus. It localises to the chromosome. Functionally, transcriptional regulator with bimodal DNA-binding specificity. Binds with a higher affinity to methylated CpG dinucleotides in the consensus sequence 5'-CGCG-3' but can also bind to E-box elements (5'-CACGTG-3'). Can also bind specifically to a single methyl-CpG pair. Represses transcription in a methyl-CpG-dependent manner. Plays an important role in regulating DNA-replication and common fragile sites (CFS) stability in a RBBP6- and MCM10-dependent manner; represses expression of MCM10 which plays an important role in DNA-replication. Acts as a transcriptional activator. May be involved in the differentiation and/or survival of late postmitotic neurons. The sequence is that of Zinc finger and BTB domain-containing protein 38 from Rattus norvegicus (Rat).